Here is a 156-residue protein sequence, read N- to C-terminus: Large ribosomal subunit protein uL15 (156 aa).

The interval 1-56 is disordered; that stretch reads MDLSNLKPAEGATQAGQRLGRGEGSGRGGHSSTRGTKGQSSRSGSGTRPIWFEGGQ.

Belongs to the universal ribosomal protein uL15 family. In terms of assembly, part of the 50S ribosomal subunit.

Binds to the 23S rRNA. This chain is Large ribosomal subunit protein uL15, found in Salinibacter ruber (strain DSM 13855 / M31).